We begin with the raw amino-acid sequence, 153 residues long: D-aminoacyl-tRNA deacylase (153 aa).

The Gly-cisPro motif, important for rejection of L-amino acids motif lies at 142-143 (GP).

This sequence belongs to the DTD family. In terms of assembly, homodimer.

The protein resides in the cytoplasm. The enzyme catalyses glycyl-tRNA(Ala) + H2O = tRNA(Ala) + glycine + H(+). It catalyses the reaction a D-aminoacyl-tRNA + H2O = a tRNA + a D-alpha-amino acid + H(+). Its function is as follows. An aminoacyl-tRNA editing enzyme that deacylates mischarged D-aminoacyl-tRNAs. Also deacylates mischarged glycyl-tRNA(Ala), protecting cells against glycine mischarging by AlaRS. Acts via tRNA-based rather than protein-based catalysis; rejects L-amino acids rather than detecting D-amino acids in the active site. By recycling D-aminoacyl-tRNA to D-amino acids and free tRNA molecules, this enzyme counteracts the toxicity associated with the formation of D-aminoacyl-tRNA entities in vivo and helps enforce protein L-homochirality. This chain is D-aminoacyl-tRNA deacylase, found in Acidovorax ebreus (strain TPSY) (Diaphorobacter sp. (strain TPSY)).